The following is a 534-amino-acid chain: Glycerophosphodiester transporter GIT2 (534 aa).

The next 12 membrane-spanning stretches (helical) occupy residues 63 to 83 (GAGL…MACL), 96 to 116 (AISN…LSFG), 135 to 155 (LIAF…QGFF), 163 to 183 (FCLG…ASEF), 202 to 222 (FMID…LWIF), 230 to 250 (LWRV…FIRL), 289 to 309 (MIWF…AIIL), 322 to 342 (WGWS…GAFS), 350 to 370 (LTLA…SACL), 377 to 397 (VAAF…GPGG), 417 to 437 (GIAA…FPAI), and 453 to 473 (VPFY…FFLC).

Belongs to the major facilitator superfamily. Sugar transporter (TC 2.A.1.1) family.

The protein resides in the cell membrane. Functionally, probable glycerophosphodiester transporter. Does not possess detectable glycerophosphoinositol (GroPIns) transport activity. Might be involved in the uptake of glycerophosphocholine (GroPCho). The expanded ability to utilize GroPIns and GroPCho results from the organism's pathogenic nature and its need to occupy a variety of environments within its host organism. This possibility is buttressed by the fact that GroPIns and GroPCho are present and abundant in human fluids. This is Glycerophosphodiester transporter GIT2 from Candida albicans (strain SC5314 / ATCC MYA-2876) (Yeast).